The following is a 667-amino-acid chain: DNA ligase (667 aa).

Residues 34–38, 83–84, and glutamate 114 each bind NAD(+); these read DQEYD and SL. Lysine 116 (N6-AMP-lysine intermediate) is an active-site residue. 4 residues coordinate NAD(+): arginine 137, glutamate 170, lysine 286, and lysine 310. Zn(2+) is bound by residues cysteine 404, cysteine 407, cysteine 422, and cysteine 427. The BRCT domain occupies 588 to 667; it reads HLAQKFENYR…EFQQLLSKED (80 aa).

This sequence belongs to the NAD-dependent DNA ligase family. LigA subfamily. Requires Mg(2+) as cofactor. Mn(2+) serves as cofactor.

It carries out the reaction NAD(+) + (deoxyribonucleotide)n-3'-hydroxyl + 5'-phospho-(deoxyribonucleotide)m = (deoxyribonucleotide)n+m + AMP + beta-nicotinamide D-nucleotide.. DNA ligase that catalyzes the formation of phosphodiester linkages between 5'-phosphoryl and 3'-hydroxyl groups in double-stranded DNA using NAD as a coenzyme and as the energy source for the reaction. It is essential for DNA replication and repair of damaged DNA. This Spiroplasma citri protein is DNA ligase.